A 139-amino-acid chain; its full sequence is Ribonuclease homolog (139 aa).

The signal sequence occupies residues 1–23 (MAMSSLWWTAILLLALTVSMCYG). The active-site Proton acceptor is the histidine 34. 3 disulfide bridges follow: cysteine 49-cysteine 102, cysteine 64-cysteine 111, and cysteine 82-cysteine 126. Residue 65–69 (KSFNT) coordinates substrate. The Proton donor role is filled by histidine 133.

Belongs to the pancreatic ribonuclease family.

The protein resides in the secreted. This is Ribonuclease homolog from Gallus gallus (Chicken).